Reading from the N-terminus, the 165-residue chain is Crossover junction endodeoxyribonuclease RuvC (165 aa).

Active-site residues include D7, E67, and D140. D7, E67, and D140 together coordinate Mg(2+).

Belongs to the RuvC family. As to quaternary structure, homodimer which binds Holliday junction (HJ) DNA. The HJ becomes 2-fold symmetrical on binding to RuvC with unstacked arms; it has a different conformation from HJ DNA in complex with RuvA. In the full resolvosome a probable DNA-RuvA(4)-RuvB(12)-RuvC(2) complex forms which resolves the HJ. Mg(2+) is required as a cofactor.

The protein resides in the cytoplasm. It catalyses the reaction Endonucleolytic cleavage at a junction such as a reciprocal single-stranded crossover between two homologous DNA duplexes (Holliday junction).. The RuvA-RuvB-RuvC complex processes Holliday junction (HJ) DNA during genetic recombination and DNA repair. Endonuclease that resolves HJ intermediates. Cleaves cruciform DNA by making single-stranded nicks across the HJ at symmetrical positions within the homologous arms, yielding a 5'-phosphate and a 3'-hydroxyl group; requires a central core of homology in the junction. The consensus cleavage sequence is 5'-(A/T)TT(C/G)-3'. Cleavage occurs on the 3'-side of the TT dinucleotide at the point of strand exchange. HJ branch migration catalyzed by RuvA-RuvB allows RuvC to scan DNA until it finds its consensus sequence, where it cleaves and resolves the cruciform DNA. This chain is Crossover junction endodeoxyribonuclease RuvC, found in Halothermothrix orenii (strain H 168 / OCM 544 / DSM 9562).